The following is a 359-amino-acid chain: Protein RecA (359 aa).

Residue Gly64–Thr71 coordinates ATP. The segment at Asn328–Ile359 is disordered. Residues Pro331 to Lys344 are compositionally biased toward basic and acidic residues.

Belongs to the RecA family.

Its subcellular location is the cytoplasm. Can catalyze the hydrolysis of ATP in the presence of single-stranded DNA, the ATP-dependent uptake of single-stranded DNA by duplex DNA, and the ATP-dependent hybridization of homologous single-stranded DNAs. It interacts with LexA causing its activation and leading to its autocatalytic cleavage. In Francisella tularensis subsp. novicida (strain U112), this protein is Protein RecA.